The sequence spans 346 residues: Pyrophosphate--fructose 6-phosphate 1-phosphotransferase (346 aa).

G13 contacts diphosphate. E105 lines the Mg(2+) pocket. Residues 127–129 (TID), R164, 171–173 (MGR), E224, R269, and 275–278 (HLQR) contribute to the substrate site. The Proton acceptor role is filled by D129.

Belongs to the phosphofructokinase type A (PFKA) family. Mixed-substrate PFK group III subfamily. As to quaternary structure, homodimer. Mg(2+) serves as cofactor.

The protein localises to the cytoplasm. It carries out the reaction beta-D-fructose 6-phosphate + diphosphate = beta-D-fructose 1,6-bisphosphate + phosphate + H(+). Its pathway is carbohydrate degradation; glycolysis; D-glyceraldehyde 3-phosphate and glycerone phosphate from D-glucose: step 3/4. Non-allosteric. Its function is as follows. Catalyzes the phosphorylation of D-fructose 6-phosphate, the first committing step of glycolysis. Uses inorganic phosphate (PPi) as phosphoryl donor instead of ATP like common ATP-dependent phosphofructokinases (ATP-PFKs), which renders the reaction reversible, and can thus function both in glycolysis and gluconeogenesis. Consistently, PPi-PFK can replace the enzymes of both the forward (ATP-PFK) and reverse (fructose-bisphosphatase (FBPase)) reactions. The chain is Pyrophosphate--fructose 6-phosphate 1-phosphotransferase from Dictyoglomus thermophilum.